The primary structure comprises 723 residues: Threonine--tRNA ligase, mitochondrial (723 aa).

Ser57 carries the post-translational modification Phosphoserine. The TGS domain maps to 64-126 (RAIKISLPEG…ETDCHLRFLT (63 aa)).

Belongs to the class-II aminoacyl-tRNA synthetase family. In terms of assembly, homodimer.

Its subcellular location is the mitochondrion matrix. The enzyme catalyses tRNA(Thr) + L-threonine + ATP = L-threonyl-tRNA(Thr) + AMP + diphosphate + H(+). In terms of biological role, catalyzes the attachment of threonine to tRNA(Thr) in a two-step reaction: threonine is first activated by ATP to form Thr-AMP and then transferred to the acceptor end of tRNA(Thr). Also edits incorrectly charged tRNA(Thr) via its editing domain. In Mus musculus (Mouse), this protein is Threonine--tRNA ligase, mitochondrial (Tars2).